The chain runs to 349 residues: Protein Wnt-7a (349 aa).

Residues 1–31 (MNRKARRCLGHLFLSLGMVYLRIGGFSTVVA) form the signal peptide. Cystine bridges form between C73–C84, C123–C131, C133–C152, C200–C214, and C202–C209. Residues N83 and N127 are each glycosylated (N-linked (GlcNAc...) asparagine). S206 carries the O-palmitoleoyl serine; by PORCN lipid modification. The interval 238-266 (VEPVRASRNKRPTFLKIKKPLSYRKPMDT) is disordered linker. Cystine bridges form between C278/C309, C294/C304, C308/C348, C324/C339, C326/C336, and C331/C332. N295 carries N-linked (GlcNAc...) asparagine glycosylation.

This sequence belongs to the Wnt family. Forms a soluble 1:1 complex with AFM; this prevents oligomerization and is required for prolonged biological activity. The complex with AFM may represent the physiological form in body fluids. Interacts with PORCN. Interacts (via intrinsically disordered linker region) with RECK; interaction with RECK confers ligand selectivity for Wnt7 in brain endothelial cells and allows these cells to selectively respond to Wnt7. Interacts with FZD5. Post-translationally, palmitoleoylation is required for efficient binding to frizzled receptors. Depalmitoleoylation leads to Wnt signaling pathway inhibition.

The protein localises to the secreted. Its subcellular location is the extracellular space. It localises to the extracellular matrix. Functionally, ligand for members of the frizzled family of seven transmembrane receptors that functions in the canonical Wnt/beta-catenin signaling pathway. Plays an important role in embryonic development, including dorsal versus ventral patterning during limb development, skeleton development and urogenital tract development. Required for central nervous system (CNS) angiogenesis and blood-brain barrier regulation. Required for normal, sexually dimorphic development of the Mullerian ducts, and for normal fertility in both sexes. Required for normal neural stem cell proliferation in the hippocampus dentate gyrus. Required for normal progress through the cell cycle in neural progenitor cells, for self-renewal of neural stem cells, and for normal neuronal differentiation and maturation. Promotes formation of synapses via its interaction with FZD5. The sequence is that of Protein Wnt-7a (WNT7A) from Chlorocebus aethiops (Green monkey).